We begin with the raw amino-acid sequence, 802 residues long: Phenylalanine--tRNA ligase beta subunit (802 aa).

One can recognise a tRNA-binding domain in the interval 39–154 (AEGLSKLVVG…EDAVPGDSIF (116 aa)). Positions 407–482 (TEPVQVSTSL…RIYGYEKLPT (76 aa)) constitute a B5 domain. Mg(2+) contacts are provided by aspartate 460, aspartate 466, glutamate 469, and glutamate 470. Positions 709–802 (TKFPAVSRDI…LTEKVEAEVR (94 aa)) constitute an FDX-ACB domain.

The protein belongs to the phenylalanyl-tRNA synthetase beta subunit family. Type 1 subfamily. In terms of assembly, tetramer of two alpha and two beta subunits. Mg(2+) serves as cofactor.

The protein localises to the cytoplasm. It carries out the reaction tRNA(Phe) + L-phenylalanine + ATP = L-phenylalanyl-tRNA(Phe) + AMP + diphosphate + H(+). The sequence is that of Phenylalanine--tRNA ligase beta subunit from Streptococcus thermophilus (strain CNRZ 1066).